The chain runs to 167 residues: Transcription initiation factor TFIID subunit 10 (167 aa).

Disordered regions lie at residues 1 to 56 (MASD…EESE) and 119 to 139 (TTNI…NPKD). Acidic residues predominate over residues 41–56 (EQPDVEEVPLTTEESE). Basic and acidic residues predominate over residues 130–139 (SSKDKKNPKD).

This sequence belongs to the TAF10 family. As to quaternary structure, belongs to the TFIID complex which is composed of TATA binding protein (Tbp) and a number of TBP-associated factors (TAFs). Also a member of the histone acetylase (HAT) complex. In terms of tissue distribution, at embryonic stage 9, highest expression is detected within the ectoderm, ventral chord, and anterior foregut primordium. Later in development preferential expression is in the foregut, proventriculus, and central nervous system. Coexpressed with Taf10b in the lateral epidermis and anal plate.

It is found in the cytoplasm. The protein resides in the nucleus. Its function is as follows. TFIID is a multimeric protein complex that plays a central role in mediating promoter responses to various activators and repressors. The polypeptide is Transcription initiation factor TFIID subunit 10 (Drosophila melanogaster (Fruit fly)).